The following is a 213-amino-acid chain: tRNA (guanine-N(7)-)-methyltransferase (213 aa).

Glu44, Asp69, Asp96, and Asp118 together coordinate S-adenosyl-L-methionine. The active site involves Asp118. Substrate is bound at residue Lys122. Residues 124–129 (RHEKRR) are interaction with RNA. Substrate is bound by residues Asp154 and 191–194 (TEYE).

The protein belongs to the class I-like SAM-binding methyltransferase superfamily. TrmB family.

The catalysed reaction is guanosine(46) in tRNA + S-adenosyl-L-methionine = N(7)-methylguanosine(46) in tRNA + S-adenosyl-L-homocysteine. It participates in tRNA modification; N(7)-methylguanine-tRNA biosynthesis. Its function is as follows. Catalyzes the formation of N(7)-methylguanine at position 46 (m7G46) in tRNA. In Streptococcus thermophilus (strain CNRZ 1066), this protein is tRNA (guanine-N(7)-)-methyltransferase.